The primary structure comprises 138 residues: Large ribosomal subunit protein mL54 (138 aa).

Residues 1–16 (MAARRLFGATGSWARW) constitute a mitochondrion transit peptide.

It belongs to the mitochondrion-specific ribosomal protein mL54 family. As to quaternary structure, component of the mitochondrial ribosome large subunit (39S) which comprises a 16S rRNA and about 50 distinct proteins.

The protein localises to the mitochondrion. This Bos taurus (Bovine) protein is Large ribosomal subunit protein mL54 (MRPL54).